We begin with the raw amino-acid sequence, 277 residues long: Zaragozic acid A biosynthesis cluster protein 1 (277 aa).

The protein operates within secondary metabolite biosynthesis. Its function is as follows. Part of the gene cluster that mediates the biosynthesis of squalestatin S1 (SQS1, also known as zaragozic acid A), a heavily oxidized fungal polyketide that offers potent cholesterol lowering activity by targeting squalene synthase (SS). SQS1 is composed of a 2,8-dioxobicyclic[3.2.1]octane-3,4,5-tricarboxyclic acid core that is connected to two lipophilic polyketide arms. These initial steps feature the priming of an unusual benzoic acid starter unit onto the highly reducing polyketide synthase clz14, followed by oxaloacetate extension and product release to generate a tricarboxylic acid containing product. The phenylalanine ammonia lyase (PAL) clz10 and the acyl-CoA ligase clz12 are involved in transforming phenylalanine into benzoyl-CoA. The citrate synthase-like protein clz17 is involved in connecting the C-alpha-carbons of the hexaketide chain and oxaloacetate to afford the tricarboxylic acid unit. The potential hydrolytic enzymes, clz11 and clz13, are in close proximity to pks2 and may participate in product release. On the other side, the tetraketide arm is synthesized by a the squalestatin tetraketide synthase clz2 and enzymatically esterified to the core in the last biosynthetic step, by the acetyltransferase clz6. The biosynthesis of the tetraketide must involve 3 rounds of chain extension. After the first and second rounds methyl-transfer occurs, and in all rounds of extension the ketoreductase and dehydratase are active. The enoyl reductase and C-MeT of clz2 are not active in the final round of extension. The acetyltransferase clz6 appears to have a broad substrate selectivity for its acyl CoA substrate, allowing the in vitro synthesis of novel squalestatins. The biosynthesis of SQS1 requires several oxidative steps likely performed by oxidoreductases clz3, clz15 and clz16. Finally, in support of the identification of the cluster as being responsible for SQS1 production, the cluster contains a gene encoding a putative squalene synthase (SS) clz20, suggesting a likely mechanism for self-resistance. This chain is Zaragozic acid A biosynthesis cluster protein 1, found in Cochliobolus lunatus (Filamentous fungus).